Reading from the N-terminus, the 219-residue chain is Proteasome subunit beta (219 aa).

Residues 1–14 constitute a propeptide, removed in mature form; by autocatalysis; the sequence is MISGSEYHKEYMKG. The active-site Nucleophile is threonine 15.

The protein belongs to the peptidase T1B family. The 20S proteasome core is composed of 14 alpha and 14 beta subunits that assemble into four stacked heptameric rings, resulting in a barrel-shaped structure. The two inner rings, each composed of seven catalytic beta subunits, are sandwiched by two outer rings, each composed of seven alpha subunits. The catalytic chamber with the active sites is on the inside of the barrel. Has a gated structure, the ends of the cylinder being occluded by the N-termini of the alpha-subunits. Is capped at one or both ends by the proteasome regulatory ATPase, PAN.

The protein resides in the cytoplasm. It catalyses the reaction Cleavage of peptide bonds with very broad specificity.. Its activity is regulated as follows. The formation of the proteasomal ATPase PAN-20S proteasome complex, via the docking of the C-termini of PAN into the intersubunit pockets in the alpha-rings, triggers opening of the gate for substrate entry. Interconversion between the open-gate and close-gate conformations leads to a dynamic regulation of the 20S proteasome proteolysis activity. Component of the proteasome core, a large protease complex with broad specificity involved in protein degradation. The polypeptide is Proteasome subunit beta (Methanococcus vannielii (strain ATCC 35089 / DSM 1224 / JCM 13029 / OCM 148 / SB)).